The following is a 237-amino-acid chain: Phosphoribosylaminoimidazole-succinocarboxamide synthase (237 aa).

Belongs to the SAICAR synthetase family.

The catalysed reaction is 5-amino-1-(5-phospho-D-ribosyl)imidazole-4-carboxylate + L-aspartate + ATP = (2S)-2-[5-amino-1-(5-phospho-beta-D-ribosyl)imidazole-4-carboxamido]succinate + ADP + phosphate + 2 H(+). Its pathway is purine metabolism; IMP biosynthesis via de novo pathway; 5-amino-1-(5-phospho-D-ribosyl)imidazole-4-carboxamide from 5-amino-1-(5-phospho-D-ribosyl)imidazole-4-carboxylate: step 1/2. The protein is Phosphoribosylaminoimidazole-succinocarboxamide synthase of Pseudomonas fluorescens (strain SBW25).